A 363-amino-acid polypeptide reads, in one-letter code: Putative C-&gt;U-editing enzyme APOBEC-4 (363 aa).

The 117-residue stretch at 61 to 177 folds into the CMP/dCMP-type deaminase domain; sequence PQTKHLTFYE…AWNREALRSL (117 aa). Histidine 93 is a Zn(2+) binding site. Catalysis depends on glutamate 95, which acts as the Proton donor. Zn(2+) contacts are provided by cysteine 127 and cysteine 134.

Belongs to the cytidine and deoxycytidylate deaminase family. It depends on Zn(2+) as a cofactor.

In terms of biological role, putative C to U editing enzyme whose physiological substrate is not yet known. This chain is Putative C-&gt;U-editing enzyme APOBEC-4 (APOBEC4), found in Macaca fascicularis (Crab-eating macaque).